The primary structure comprises 152 residues: ALK and LTK ligand 2 (152 aa).

An N-terminal signal peptide occupies residues 1–24 (MRGPGHPLLLGLLLVLGAAGRGRG). Intrachain disulfides connect Cys-111/Cys-147 and Cys-125/Cys-134.

It belongs to the ALKAL family. Homodimer; interchain disulfide bond is not required for homodimerization. Widely expressed with highest levels in adrenal gland and modest levels in pancreas, testis and uterus.

The protein resides in the secreted. The protein localises to the cell membrane. Its function is as follows. Cytokine that acts as a physiological ligand for receptor tyrosine kinases LTK and ALK, leading to their activation. Cytokine-binding is sufficient to activate LTK. In contrast, ALKAL2-driven activation of ALK is coupled with heparin-binding to ALK. Stimulation of ALK signaling is involved in neural development and regulation of energy expenditure. The sequence is that of ALK and LTK ligand 2 from Homo sapiens (Human).